Reading from the N-terminus, the 174-residue chain is Gamma-crystallin M3 (174 aa).

2 Beta/gamma crystallin 'Greek key' domains span residues 2 to 40 (GKII…RVES) and 41 to 82 (GCFV…RMVP). A connecting peptide region spans residues 83–87 (QYRGP). 2 Beta/gamma crystallin 'Greek key' domains span residues 88–128 (YRMR…HVMD) and 129–171 (GHWL…RRIM).

This sequence belongs to the beta/gamma-crystallin family. As to quaternary structure, monomer.

Its function is as follows. Crystallins are the dominant structural components of the vertebrate eye lens. The chain is Gamma-crystallin M3 from Cyprinus carpio (Common carp).